Consider the following 910-residue polypeptide: Eukaryotic translation initiation factor 3 subunit C (910 aa).

The interval 1-21 (MSRFFANGSDSESESSEDEIQ) is disordered. Positions 11 to 20 (SESESSEDEI) are enriched in acidic residues. 4 positions are modified to phosphoserine: Ser34, Ser165, Ser176, and Ser185. Residues 157–281 (FREAPDQESE…KRAEDDEDGE (125 aa)) form a disordered region. Positions 162-186 (DQESEAEDEVVAQESDGGDAGDDSD) are enriched in acidic residues. Low complexity predominate over residues 193 to 207 (EAAPKAVKSAPAKAA). The span at 209 to 235 (ADDDDSDDSIDWDSDSESETESSDDEN) shows a compositional bias: acidic residues. Over residues 240–268 (MRERFLKRTTEKEEKDDDKRKDKRKEQKV) the composition is skewed to basic and acidic residues. Positions 639–815 (FHMHINLELL…ETVVMHRSEP (177 aa)) constitute a PCI domain. The disordered stretch occupies residues 847–910 (FFQRGNMGNR…QQQVQTIDEE (64 aa)). The segment covering 862-874 (NRNQNNQGGNWLG) has biased composition (low complexity). Residues 882 to 891 (RNRNQRGHHK) are compositionally biased toward basic residues. Residues 895–910 (DRQQQQQQQVQTIDEE) show a composition bias toward low complexity.

It belongs to the eIF-3 subunit C family. As to quaternary structure, component of the eukaryotic translation initiation factor 3 (eIF-3) complex. The eIF-3 complex interacts with pix.

It is found in the cytoplasm. Functionally, component of the eukaryotic translation initiation factor 3 (eIF-3) complex, which is involved in protein synthesis of a specialized repertoire of mRNAs and, together with other initiation factors, stimulates binding of mRNA and methionyl-tRNAi to the 40S ribosome. The eIF-3 complex specifically targets and initiates translation of a subset of mRNAs involved in cell proliferation. In Drosophila yakuba (Fruit fly), this protein is Eukaryotic translation initiation factor 3 subunit C.